Reading from the N-terminus, the 281-residue chain is Elongation factor Ts (281 aa).

Residues 86–89 (TDFV) are involved in Mg(2+) ion dislocation from EF-Tu.

It belongs to the EF-Ts family.

The protein resides in the cytoplasm. Its function is as follows. Associates with the EF-Tu.GDP complex and induces the exchange of GDP to GTP. It remains bound to the aminoacyl-tRNA.EF-Tu.GTP complex up to the GTP hydrolysis stage on the ribosome. This Beutenbergia cavernae (strain ATCC BAA-8 / DSM 12333 / CCUG 43141 / JCM 11478 / NBRC 16432 / NCIMB 13614 / HKI 0122) protein is Elongation factor Ts.